Here is a 132-residue protein sequence, read N- to C-terminus: Small ribosomal subunit protein uS8 (132 aa).

Belongs to the universal ribosomal protein uS8 family. Part of the 30S ribosomal subunit. Contacts proteins S5 and S12.

In terms of biological role, one of the primary rRNA binding proteins, it binds directly to 16S rRNA central domain where it helps coordinate assembly of the platform of the 30S subunit. The polypeptide is Small ribosomal subunit protein uS8 (Rickettsia canadensis (strain McKiel)).